An 841-amino-acid chain; its full sequence is Translation initiation factor IF-2 (841 aa).

One can recognise a tr-type G domain in the interval 341-508 (NRAPVVTIMG…AILLQAEILE (168 aa)). The G1 stretch occupies residues 350 to 357 (GHVDHGKT). 350–357 (GHVDHGKT) contributes to the GTP binding site. Residues 375–379 (GITQC) are G2. The interval 396-399 (DTPG) is G3. Residues 396–400 (DTPGH) and 450–453 (NKID) each bind GTP. A G4 region spans residues 450–453 (NKID). The G5 stretch occupies residues 486 to 488 (SAK).

This sequence belongs to the TRAFAC class translation factor GTPase superfamily. Classic translation factor GTPase family. IF-2 subfamily.

It is found in the cytoplasm. Its function is as follows. One of the essential components for the initiation of protein synthesis. Protects formylmethionyl-tRNA from spontaneous hydrolysis and promotes its binding to the 30S ribosomal subunits. Also involved in the hydrolysis of GTP during the formation of the 70S ribosomal complex. The polypeptide is Translation initiation factor IF-2 (Wigglesworthia glossinidia brevipalpis).